A 426-amino-acid polypeptide reads, in one-letter code: MKQLRLEPVVQVRGEINIPGSKSISNRALLLATLAKGTTTLTNLLDSDDIRHMLASLKQLGVEYRLSQNNTVCELTGLGGVISSDTAQTLFLGNAGTAMRPLCAALTLGRGEFTLTGEPRMEERPIGDLVDALKQLGANIVYLKNDGFPPLTINATGLNGGDVEIAGDLSSQFLTALLMVAPLAKGSVNIHVKGELVSKPYIDITLALMAQFGVQVINHDYARFEIPAGQQYVSPGKVLVEGDASSASYFLAAGAIKGGEVKVTGVGRLSIQGDVKFADVLEKMGADIEWGDDYIIARGAPLTAVDLDMNHIPDAAMTIATAALFAKGTTTIRNIYNWRIKETDRLAAMATELRKVGALVEEGHDYIQITPPVVLNTAEIDTYNDHRMAMCFSMMAFADCGITINDPDCTSKTFPDYFAQFASLKA.

Residues lysine 22, serine 23, and arginine 27 each coordinate 3-phosphoshikimate. Residue lysine 22 participates in phosphoenolpyruvate binding. Phosphoenolpyruvate-binding residues include glycine 96 and arginine 124. Positions 170, 171, 172, 198, 314, 337, and 341 each coordinate 3-phosphoshikimate. Glutamine 172 is a binding site for phosphoenolpyruvate. Catalysis depends on aspartate 314, which acts as the Proton acceptor. Residues arginine 345, arginine 387, and lysine 412 each contribute to the phosphoenolpyruvate site.

Belongs to the EPSP synthase family. In terms of assembly, monomer.

It localises to the cytoplasm. The catalysed reaction is 3-phosphoshikimate + phosphoenolpyruvate = 5-O-(1-carboxyvinyl)-3-phosphoshikimate + phosphate. It functions in the pathway metabolic intermediate biosynthesis; chorismate biosynthesis; chorismate from D-erythrose 4-phosphate and phosphoenolpyruvate: step 6/7. In terms of biological role, catalyzes the transfer of the enolpyruvyl moiety of phosphoenolpyruvate (PEP) to the 5-hydroxyl of shikimate-3-phosphate (S3P) to produce enolpyruvyl shikimate-3-phosphate and inorganic phosphate. The polypeptide is 3-phosphoshikimate 1-carboxyvinyltransferase (Shewanella sp. (strain ANA-3)).